We begin with the raw amino-acid sequence, 790 residues long: DNA ligase 1 (790 aa).

A mitochondrion-targeting transit peptide spans 1-64 (MLAIRSSNYL…AFDALMSNAR (64 aa)). Residues 64–142 (RAAAKKKTPQ…TGAKKAKTLS (79 aa)) are disordered. A Nuclear localization signal 1 motif is present at residues 68-75 (KKKTPQTT). The span at 116-128 (DSANPRSDTSSIA) shows a compositional bias: polar residues. Residues 337 to 346 (KLRLGFSGQT) form an interaction with target DNA region. Residue glutamate 442 coordinates ATP. The active-site N6-AMP-lysine intermediate is the lysine 444. ATP-binding residues include arginine 449 and arginine 465. Residue glutamate 497 participates in Mg(2+) binding. A Nuclear localization signal 2 motif is present at residues 505 to 512 (KKKILPFQ). An interaction with target DNA region spans residues 518–520 (ARK). A Mg(2+)-binding site is contributed by glutamate 596. Positions 601, 614, and 620 each coordinate ATP. A disordered region spans residues 757–790 (DKKPEEATSSEQIADLYQAQKHNHPSNEVKGDDD). Positions 781–790 (PSNEVKGDDD) are enriched in basic and acidic residues.

This sequence belongs to the ATP-dependent DNA ligase family. Mg(2+) is required as a cofactor. As to expression, expressed in all vegetative and reproductive tissues.

Its subcellular location is the mitochondrion. The protein resides in the nucleus. The catalysed reaction is ATP + (deoxyribonucleotide)n-3'-hydroxyl + 5'-phospho-(deoxyribonucleotide)m = (deoxyribonucleotide)n+m + AMP + diphosphate.. Functionally, essential protein. DNA ligase that seals nicks in double-stranded DNA during DNA replication, DNA recombination and DNA repair. Involved in repair of both single strand breaks (SSBs) and double strand breaks (DSBs). Required in the endosperm for embryogenesis, probably to repair DNA-breaks generated by DME. In Arabidopsis thaliana (Mouse-ear cress), this protein is DNA ligase 1 (LIG1).